The chain runs to 61 residues: Small ribosomal subunit protein uS14 (61 aa).

Residues Cys24, Cys27, Cys40, and Cys43 each coordinate Zn(2+).

Belongs to the universal ribosomal protein uS14 family. Zinc-binding uS14 subfamily. Part of the 30S ribosomal subunit. Contacts proteins S3 and S10. Zn(2+) serves as cofactor.

Binds 16S rRNA, required for the assembly of 30S particles and may also be responsible for determining the conformation of the 16S rRNA at the A site. This chain is Small ribosomal subunit protein uS14, found in Trichlorobacter lovleyi (strain ATCC BAA-1151 / DSM 17278 / SZ) (Geobacter lovleyi).